The sequence spans 373 residues: D-alanine--D-alanine ligase (373 aa).

The region spanning Lys165–Ala369 is the ATP-grasp domain. Lys192–Glu247 provides a ligand contact to ATP. 3 residues coordinate Mg(2+): Asp324, Glu336, and Asn338.

Belongs to the D-alanine--D-alanine ligase family. Requires Mg(2+) as cofactor. Mn(2+) is required as a cofactor.

The protein resides in the cytoplasm. The catalysed reaction is 2 D-alanine + ATP = D-alanyl-D-alanine + ADP + phosphate + H(+). It participates in cell wall biogenesis; peptidoglycan biosynthesis. Cell wall formation. This chain is D-alanine--D-alanine ligase, found in Corynebacterium jeikeium (strain K411).